Here is a 546-residue protein sequence, read N- to C-terminus: Chaperonin GroEL (546 aa).

ATP-binding positions include 30-33 (TLGP), K51, 87-91 (DGTTT), G415, and D496. The disordered stretch occupies residues 527–546 (EKKAPAGAPGGMGGMGDMDF). Over residues 534 to 546 (APGGMGGMGDMDF) the composition is skewed to gly residues.

This sequence belongs to the chaperonin (HSP60) family. In terms of assembly, forms a cylinder of 14 subunits composed of two heptameric rings stacked back-to-back. Interacts with the co-chaperonin GroES.

Its subcellular location is the cytoplasm. The enzyme catalyses ATP + H2O + a folded polypeptide = ADP + phosphate + an unfolded polypeptide.. Functionally, together with its co-chaperonin GroES, plays an essential role in assisting protein folding. The GroEL-GroES system forms a nano-cage that allows encapsulation of the non-native substrate proteins and provides a physical environment optimized to promote and accelerate protein folding. This Rhodospirillum centenum (strain ATCC 51521 / SW) protein is Chaperonin GroEL.